A 241-amino-acid polypeptide reads, in one-letter code: Protein McbE (241 aa).

A run of 6 helical transmembrane segments spans residues 17 to 35 (TPFS…FFFL), 54 to 72 (ISWF…NYCL), 105 to 123 (LIMS…LTGF), 131 to 149 (IVMI…MVSL), 163 to 181 (STIY…IVSL), and 212 to 230 (LMTI…ISAL).

Its subcellular location is the cell membrane. Together with two further proteins McbF and McbG this protein causes immunity to the peptide antibiotic microcin B17 (MccB17), which inhibits DNA replication in enterobacteriaceae. Immunity is determined by two different mechanisms. McbE is involved in the production of extracellular MccB17 and, in a complex with McbF it also serves as 'pump' for the export of active MccB17 from the cytoplasm to the periplasmic space. The chain is Protein McbE (mcbE) from Escherichia coli.